The primary structure comprises 396 residues: Chorismate synthase (396 aa).

NADP(+) is bound by residues R40 and R46. FMN-binding positions include 134–136 (RSS), 257–258 (QA), G302, 317–321 (KPIPS), and R343.

The protein belongs to the chorismate synthase family. Homotetramer. FMNH2 serves as cofactor.

The catalysed reaction is 5-O-(1-carboxyvinyl)-3-phosphoshikimate = chorismate + phosphate. It participates in metabolic intermediate biosynthesis; chorismate biosynthesis; chorismate from D-erythrose 4-phosphate and phosphoenolpyruvate: step 7/7. Functionally, catalyzes the anti-1,4-elimination of the C-3 phosphate and the C-6 proR hydrogen from 5-enolpyruvylshikimate-3-phosphate (EPSP) to yield chorismate, which is the branch point compound that serves as the starting substrate for the three terminal pathways of aromatic amino acid biosynthesis. This reaction introduces a second double bond into the aromatic ring system. The sequence is that of Chorismate synthase from Bifidobacterium animalis subsp. lactis (strain AD011).